The following is a 300-amino-acid chain: MTENNPTRCGYVAIVGRPNVGKSTLLNHILGQKLAITSRKPQTTRHNMLGIKTEGDVQAIYVDTPGMHKANDKALNRYMNRNASAALKDVDVVIFVVDRTRWTDEDQLVLERVQYVTGPLIIAVNKTDRMDEKAELIPHLQWLQEQLPNAEVVPISAQQGHNLEALEALIAKHLPENDHFFPEDQITDRSSRFLAAELVREKIMRQLGAELPYQITVEIEEFKQQGHVLHIHALILVERDGQKKIIIGDKGERIKRIGSDARKDMETLFDAKVMLNLWVKVKGGWSDDERALRSLGYGDL.

An Era-type G domain is found at arginine 8–glutamate 176. The interval glycine 16–serine 23 is G1. Glycine 16–serine 23 contacts GTP. The tract at residues glutamine 42–histidine 46 is G2. Residues aspartate 63 to glycine 66 are G3. GTP is bound by residues aspartate 63–methionine 67 and asparagine 125–aspartate 128. Residues asparagine 125–aspartate 128 form a G4 region. The tract at residues isoleucine 155–alanine 157 is G5. The KH type-2 domain maps to valine 199–glycine 283.

Belongs to the TRAFAC class TrmE-Era-EngA-EngB-Septin-like GTPase superfamily. Era GTPase family. As to quaternary structure, monomer.

Its subcellular location is the cytoplasm. The protein resides in the cell inner membrane. Functionally, an essential GTPase that binds both GDP and GTP, with rapid nucleotide exchange. Plays a role in 16S rRNA processing and 30S ribosomal subunit biogenesis and possibly also in cell cycle regulation and energy metabolism. This chain is GTPase Era, found in Pseudomonas putida (strain W619).